Reading from the N-terminus, the 2201-residue chain is Tenascin (2201 aa).

The first 22 residues, 1–22, serve as a signal peptide directing secretion; it reads MGAMTQLLAGVFLAFLALATEG. A glycan (N-linked (GlcNAc...) asparagine) is linked at N38. 2 positions are modified to phosphoserine: S65 and S70. S72 carries the phosphoserine; by FAM20C modification. An O-linked (Xyl...) (chondroitin sulfate) serine glycan is attached at S72. The stretch at 118-145 forms a coiled coil; it reads DVKELLSRLEELENLVSSLREQCTAGAG. N-linked (GlcNAc...) asparagine glycans are attached at residues N166 and N184. The EGF-like 1; incomplete domain occupies 174–186; the sequence is CVCEPGWKGPNCS. EGF-like domains are found at residues 186-217, 217-248, 248-280, 280-311, 311-342, 342-373, 373-404, 404-435, 435-466, 466-497, 497-528, 528-559, 559-590, and 590-621; these read SEPECPGNCHLRGRCIDGQCICDDGFTGEDCS, SQLACPSDCNDQGKCVNGVCICFEGYAGADCS, SREICPVPCSEEHGTCVDGLCVCHDGFAGDDCN, NKPLCLNNCYNRGRCVENECVCDEGFTGEDCS, SELICPNDCFDRGRCINGTCYCEEGFTGEDCG, GKPTCPHACHTQGRCEEGQCVCDEGFAGVDCS, SEKRCPADCHNRGRCVDGRCECDDGFTGADCG, GELKCPNGCSGHGRCVNGQCVCDEGYTGEDCS, SQLRCPNDCHSRGRCVEGKCVCEQGFKGYDCS, SDMSCPNDCHQHGRCVNGMCVCDDGYTGEDCR, RDRQCPRDCSNRGLCVDGQCVCEDGFTGPDCA, AELSCPNDCHGQGRCVNGQCVCHEGFMGKDCK, KEQRCPSDCHGQGRCVDGQCICHEGFTGLDCG, and GQHSCPSDCNNLGQCVSGRCICNEGYSGEDCS. Intrachain disulfides connect C190–C200, C194–C205, C207–C216, C221–C231, C225–C236, C238–C247, C252–C263, C256–C268, C270–C279, C284–C294, C288–C299, C301–C310, C315–C325, C319–C330, C332–C341, C346–C356, C350–C361, C363–C372, C377–C387, C381–C392, C394–C403, C408–C418, C412–C423, C425–C434, C439–C449, C443–C454, C456–C465, C470–C480, C474–C485, C487–C496, C501–C511, C505–C516, C518–C527, C532–C542, C536–C547, C549–C558, C563–C573, C567–C578, C580–C589, C594–C604, C598–C609, and C611–C620. N-linked (GlcNAc...) asparagine glycosylation is present at N327. Fibronectin type-III domains follow at residues 625-715, 716-804, 805-894, 895-990, 991-1075, 1076-1165, 1167-1256, 1258-1350, 1351-1439, 1440-1531, 1533-1621, 1622-1711, 1712-1801, 1802-1888, and 1889-1977; these read PPKD…LPAP, EGLK…TRLD, APSQ…TGLD, APRN…TPKD, LQVS…EQAP, ELEN…TGET, NLGE…TEEV, DMGN…LPQL, GDLA…AKEP, EIGN…ALPL, ENLT…EAEP, EVDN…TAMG, SPKE…ALDG, PSGL…TDLD, and SPRD…IGLL. The N-linked (GlcNAc...) asparagine glycan is linked to N788. A Phosphothreonine modification is found at T905. 16 N-linked (GlcNAc...) asparagine glycosylation sites follow: N1018, N1034, N1079, N1093, N1119, N1184, N1210, N1261, N1275, N1301, N1366, N1392, N1445, N1455, N1485, and N1534. N1809 carries N-linked (GlcNAc...) asparagine glycosylation. The 216-residue stretch at 1975–2190 folds into the Fibrinogen C-terminal domain; that stretch reads GLLYPFPKDC…FAEMKLRPSN (216 aa). N2162 carries an N-linked (GlcNAc...) asparagine glycan.

Belongs to the tenascin family. In terms of assembly, homohexamer; disulfide-linked. A homotrimer may be formed in the triple coiled-coil region and may be stabilized by disulfide rings at both ends. Two of such half-hexabrachions may be disulfide linked within the central globule. Interacts with CSPG4. Interacts (via the 3rd fibronectin type-III domain) with integrin ITGA9:ITGB1. In terms of tissue distribution, detected in fibroblasts (at protein level).

The protein localises to the secreted. The protein resides in the extracellular space. It localises to the extracellular matrix. Functionally, extracellular matrix protein implicated in guidance of migrating neurons as well as axons during development, synaptic plasticity as well as neuronal regeneration. Promotes neurite outgrowth from cortical neurons grown on a monolayer of astrocytes. Ligand for integrins alpha-8/beta-1, alpha-9/beta-1, alpha-V/beta-3 and alpha-V/beta-6. In tumors, stimulates angiogenesis by elongation, migration and sprouting of endothelial cells. In Homo sapiens (Human), this protein is Tenascin (TNC).